The sequence spans 304 residues: ATP phosphoribosyltransferase (304 aa).

The protein belongs to the ATP phosphoribosyltransferase family. Long subfamily. Mg(2+) serves as cofactor.

It localises to the cytoplasm. It catalyses the reaction 1-(5-phospho-beta-D-ribosyl)-ATP + diphosphate = 5-phospho-alpha-D-ribose 1-diphosphate + ATP. The protein operates within amino-acid biosynthesis; L-histidine biosynthesis; L-histidine from 5-phospho-alpha-D-ribose 1-diphosphate: step 1/9. Feedback inhibited by histidine. In terms of biological role, catalyzes the condensation of ATP and 5-phosphoribose 1-diphosphate to form N'-(5'-phosphoribosyl)-ATP (PR-ATP). Has a crucial role in the pathway because the rate of histidine biosynthesis seems to be controlled primarily by regulation of HisG enzymatic activity. In Xylella fastidiosa (strain M12), this protein is ATP phosphoribosyltransferase.